We begin with the raw amino-acid sequence, 431 residues long: Shaggy-related protein kinase beta (431 aa).

Residues 12–24 show a composition bias toward polar residues; it reads SGRNFVSSDNVGE. A disordered region spans residues 12 to 65; that stretch reads SGRNFVSSDNVGETETPRSKPNQNREETESTETTSYEKDSVSSSENSDHLPKEI. 2 stretches are compositionally biased toward basic and acidic residues: residues 26 to 39 and 46 to 65; these read ETPR…REET and SYEK…PKEI. Residues 102–386 form the Protein kinase domain; sequence YRAEHVIGTG…ALEACAHPFF (285 aa). ATP-binding positions include 108–116 and K131; that span reads IGTGSFGVV. D227 (proton acceptor) is an active-site residue. Position 262 is a phosphotyrosine (Y262).

The protein belongs to the protein kinase superfamily. CMGC Ser/Thr protein kinase family. GSK-3 subfamily. In terms of processing, autophosphorylated mainly on threonine and serine residues.

It carries out the reaction L-seryl-[protein] + ATP = O-phospho-L-seryl-[protein] + ADP + H(+). The catalysed reaction is L-threonyl-[protein] + ATP = O-phospho-L-threonyl-[protein] + ADP + H(+). May mediate extracellular signals to regulate transcription in differentiating cells. The chain is Shaggy-related protein kinase beta from Arabidopsis thaliana (Mouse-ear cress).